Here is a 225-residue protein sequence, read N- to C-terminus: Ribosomal RNA small subunit methyltransferase G (225 aa).

S-adenosyl-L-methionine contacts are provided by residues glycine 84, phenylalanine 89, 107 to 109, 135 to 136, and arginine 154; these read DST and AE.

Belongs to the methyltransferase superfamily. RNA methyltransferase RsmG family.

The protein localises to the cytoplasm. Functionally, specifically methylates the N7 position of a guanine in 16S rRNA. In Microcystis aeruginosa (strain NIES-843 / IAM M-2473), this protein is Ribosomal RNA small subunit methyltransferase G.